The sequence spans 1629 residues: Ferredoxin-dependent glutamate synthase 2, chloroplastic (1629 aa).

A chloroplast-targeting transit peptide spans 1–107 (MALQSPGATG…LEDIISERGA (107 aa)). Cys108 functions as the For GATase activity in the catalytic mechanism. In terms of domain architecture, Glutamine amidotransferase type-2 spans 108 to 507 (CGVGFIANLE…PGMMISVDLE (400 aa)). 1186–1243 (LAETQKTLIGNGLRERVIIRVDGGFKSGVDVLIAAAMGADEYGFGTLAMIATGCIMAR) serves as a coordination point for FMN. Residues Cys1239, Cys1245, and Cys1250 each coordinate [3Fe-4S] cluster. A disordered region spans residues 1599–1629 (SEEDTPEANSDHILKTTTGDEEQVSSTLAEK).

It belongs to the glutamate synthase family. [3Fe-4S] cluster serves as cofactor. FAD is required as a cofactor. Requires FMN as cofactor. Expressed predominantly in roots and slightly in leaves. Low expression in the leaf mesophyll and phloem companion cell-sieve element complex.

The protein localises to the plastid. It is found in the chloroplast stroma. The enzyme catalyses 2 oxidized [2Fe-2S]-[ferredoxin] + 2 L-glutamate = L-glutamine + 2 reduced [2Fe-2S]-[ferredoxin] + 2-oxoglutarate + 2 H(+). It participates in amino-acid biosynthesis; L-glutamate biosynthesis via GLT pathway; L-glutamate from 2-oxoglutarate and L-glutamine (ferredoxin route): step 1/1. Its pathway is energy metabolism; nitrogen metabolism. Its function is as follows. May play a role in primary nitrogen assimilation in roots. Could supply a constitutive level of glutamate to maintain a basal level of protein synthesis. The chain is Ferredoxin-dependent glutamate synthase 2, chloroplastic (GLU2) from Arabidopsis thaliana (Mouse-ear cress).